We begin with the raw amino-acid sequence, 108 residues long: ATP-dependent Clp protease adapter protein ClpS (108 aa).

Belongs to the ClpS family. As to quaternary structure, binds to the N-terminal domain of the chaperone ClpA.

Its function is as follows. Involved in the modulation of the specificity of the ClpAP-mediated ATP-dependent protein degradation. The chain is ATP-dependent Clp protease adapter protein ClpS from Leptospira borgpetersenii serovar Hardjo-bovis (strain JB197).